The chain runs to 275 residues: Ditrans,polycis-undecaprenyl-diphosphate synthase ((2E,6E)-farnesyl-diphosphate specific) (275 aa).

D45 is an active-site residue. Mg(2+) is bound at residue D45. Residues 46 to 49 (GNGR), W50, R58, H62, and 90 to 92 (SSE) each bind substrate. N93 serves as the catalytic Proton acceptor. Residues W94, R96, R213, and 219 to 221 (RIS) contribute to the substrate site. E232 is a Mg(2+) binding site.

The protein belongs to the UPP synthase family. Homodimer. Requires Mg(2+) as cofactor.

It catalyses the reaction 8 isopentenyl diphosphate + (2E,6E)-farnesyl diphosphate = di-trans,octa-cis-undecaprenyl diphosphate + 8 diphosphate. In terms of biological role, catalyzes the sequential condensation of isopentenyl diphosphate (IPP) with (2E,6E)-farnesyl diphosphate (E,E-FPP) to yield (2Z,6Z,10Z,14Z,18Z,22Z,26Z,30Z,34E,38E)-undecaprenyl diphosphate (di-trans,octa-cis-UPP). UPP is the precursor of glycosyl carrier lipid in the biosynthesis of bacterial cell wall polysaccharide components such as peptidoglycan and lipopolysaccharide. The chain is Ditrans,polycis-undecaprenyl-diphosphate synthase ((2E,6E)-farnesyl-diphosphate specific) from Shewanella oneidensis (strain ATCC 700550 / JCM 31522 / CIP 106686 / LMG 19005 / NCIMB 14063 / MR-1).